The following is a 216-amino-acid chain: [5-(aminomethyl)furan-3-yl]methyl phosphate kinase (216 aa).

ATP-binding positions include 5-9 (KIGGS), Gly39, Asp142, 147-152 (YDKFPG), and Gly166.

It belongs to the MfnE family. Homotrimer. Requires Mg(2+) as cofactor.

The enzyme catalyses [5-(aminomethyl)-3-furyl]methyl phosphate + ATP = [5-(aminomethyl)furan-3-yl]methyl diphosphate + ADP. The protein operates within cofactor biosynthesis; methanofuran biosynthesis. Its activity is regulated as follows. Inhibited by EDTA. Functionally, catalyzes the formation of 5-(aminomethyl)-3-furanmethanol diphosphate (F1-PP) from 5-(aminomethyl)-3-furanmethanol phosphate (F1-P) and ATP. In vitro, can also act as an adenylate kinase that catalyzes the transfer of a phosphoryl group from ATP to AMP, generating two molecules of ADP. This is [5-(aminomethyl)furan-3-yl]methyl phosphate kinase from Methanocaldococcus jannaschii (strain ATCC 43067 / DSM 2661 / JAL-1 / JCM 10045 / NBRC 100440) (Methanococcus jannaschii).